The primary structure comprises 282 residues: TPR repeat protein oca3 (282 aa).

TPR repeat units lie at residues 16-50 (IVAL…ALTT), 71-104 (PRVE…DPTH), 139-172 (LEAW…QPFE), and 174-211 (RLFA…CEEY).

It is found in the cytoplasm. Its subcellular location is the nucleus. Functionally, may be involved in cell cycle regulation. The protein is TPR repeat protein oca3 (oca3) of Schizosaccharomyces pombe (strain 972 / ATCC 24843) (Fission yeast).